Here is a 678-residue protein sequence, read N- to C-terminus: Penicillin-binding protein activator LpoA (678 aa).

Positions 1–26 (MVPSTFSRLKAARCLPVVLAALIFAG) are cleaved as a signal peptide. The N-palmitoyl cysteine moiety is linked to residue cysteine 27. Cysteine 27 carries S-diacylglycerol cysteine lipidation. The span at 300–310 (AADVAEQPQPQ) shows a compositional bias: low complexity. Disordered regions lie at residues 300-340 (AADV…PVSA) and 496-528 (ALTG…DDQF). Residues 311–327 (TADSVASPAQASVSDLT) show a composition bias toward polar residues. Low complexity-rich tracts occupy residues 330–340 (QPAAQPVPVSA) and 513–528 (TTNN…DDQF).

Belongs to the LpoA family. As to quaternary structure, interacts with PBP1a.

It localises to the cell outer membrane. Functionally, regulator of peptidoglycan synthesis that is essential for the function of penicillin-binding protein 1A (PBP1a). The polypeptide is Penicillin-binding protein activator LpoA (Shigella flexneri serotype X (strain 2002017)).